The primary structure comprises 254 residues: Isoprenyl transferase (254 aa).

Asp-12 is a catalytic residue. Position 12 (Asp-12) interacts with Mg(2+). Substrate is bound by residues Gly-13–Arg-16, Trp-17, Arg-25, His-29, and Ser-57–Glu-59. Asn-60 functions as the Proton acceptor in the catalytic mechanism. Substrate is bound by residues Trp-61, Arg-63, Arg-180, and Arg-186 to Ser-188. Glu-199 contacts Mg(2+).

It belongs to the UPP synthase family. Homodimer. Requires Mg(2+) as cofactor.

Its function is as follows. Catalyzes the condensation of isopentenyl diphosphate (IPP) with allylic pyrophosphates generating different type of terpenoids. In Brucella suis biovar 1 (strain 1330), this protein is Isoprenyl transferase.